Consider the following 172-residue polypeptide: 3-hydroxydecanoyl-[acyl-carrier-protein] dehydratase (172 aa).

His71 is a catalytic residue.

Belongs to the thioester dehydratase family. FabA subfamily. As to quaternary structure, homodimer.

Its subcellular location is the cytoplasm. It catalyses the reaction a (3R)-hydroxyacyl-[ACP] = a (2E)-enoyl-[ACP] + H2O. It carries out the reaction (3R)-hydroxydecanoyl-[ACP] = (2E)-decenoyl-[ACP] + H2O. The catalysed reaction is (2E)-decenoyl-[ACP] = (3Z)-decenoyl-[ACP]. Its pathway is lipid metabolism; fatty acid biosynthesis. Necessary for the introduction of cis unsaturation into fatty acids. Catalyzes the dehydration of (3R)-3-hydroxydecanoyl-ACP to E-(2)-decenoyl-ACP and then its isomerization to Z-(3)-decenoyl-ACP. Can catalyze the dehydratase reaction for beta-hydroxyacyl-ACPs with saturated chain lengths up to 16:0, being most active on intermediate chain length. The protein is 3-hydroxydecanoyl-[acyl-carrier-protein] dehydratase of Vibrio cholerae serotype O1 (strain ATCC 39541 / Classical Ogawa 395 / O395).